We begin with the raw amino-acid sequence, 784 residues long: Lon protease (784 aa).

One can recognise a Lon N-terminal domain in the interval 11 to 204; the sequence is IPVLPLRDVV…YLMAMMESEI (194 aa). Residue 356 to 363 coordinates ATP; that stretch reads GPPGVGKT. One can recognise a Lon proteolytic domain in the interval 592–773; sequence ENRVGQVTGL…EEVLTLALQN (182 aa). Residues serine 679 and lysine 722 contribute to the active site.

Belongs to the peptidase S16 family. As to quaternary structure, homohexamer. Organized in a ring with a central cavity. ATP binding and hydrolysis do not affect the oligomeric state of the enzyme.

Its subcellular location is the cytoplasm. The catalysed reaction is Hydrolysis of proteins in presence of ATP.. Contains an allosteric site (distinct from its active site), whose occupancy by an unfolded polypeptide leads to enzyme activation. In terms of biological role, ATP-dependent serine protease that mediates the selective degradation of mutant and abnormal proteins as well as certain short-lived regulatory proteins. Required for cellular homeostasis and for survival from DNA damage and developmental changes induced by stress. Degrades polypeptides processively to yield small peptide fragments that are 5 to 10 amino acids long. Binds to DNA in a double-stranded, site-specific manner. Endogenous substrates include the regulatory proteins RcsA and SulA, the transcriptional activator SoxS, and UmuD. Its overproduction specifically inhibits translation through at least two different pathways, one of them being the YoeB-YefM toxin-antitoxin system. The polypeptide is Lon protease (Escherichia coli O6:H1 (strain CFT073 / ATCC 700928 / UPEC)).